The primary structure comprises 171 residues: Crossover junction endodeoxyribonuclease RuvC (171 aa).

Catalysis depends on residues D7, E74, and D147. 3 residues coordinate Mg(2+): D7, E74, and D147.

The protein belongs to the RuvC family. In terms of assembly, homodimer which binds Holliday junction (HJ) DNA. The HJ becomes 2-fold symmetrical on binding to RuvC with unstacked arms; it has a different conformation from HJ DNA in complex with RuvA. In the full resolvosome a probable DNA-RuvA(4)-RuvB(12)-RuvC(2) complex forms which resolves the HJ. Mg(2+) serves as cofactor.

Its subcellular location is the cytoplasm. The catalysed reaction is Endonucleolytic cleavage at a junction such as a reciprocal single-stranded crossover between two homologous DNA duplexes (Holliday junction).. In terms of biological role, the RuvA-RuvB-RuvC complex processes Holliday junction (HJ) DNA during genetic recombination and DNA repair. Endonuclease that resolves HJ intermediates. Cleaves cruciform DNA by making single-stranded nicks across the HJ at symmetrical positions within the homologous arms, yielding a 5'-phosphate and a 3'-hydroxyl group; requires a central core of homology in the junction. The consensus cleavage sequence is 5'-(A/T)TT(C/G)-3'. Cleavage occurs on the 3'-side of the TT dinucleotide at the point of strand exchange. HJ branch migration catalyzed by RuvA-RuvB allows RuvC to scan DNA until it finds its consensus sequence, where it cleaves and resolves the cruciform DNA. The protein is Crossover junction endodeoxyribonuclease RuvC of Acidobacterium capsulatum (strain ATCC 51196 / DSM 11244 / BCRC 80197 / JCM 7670 / NBRC 15755 / NCIMB 13165 / 161).